A 340-amino-acid chain; its full sequence is GTPase Obg (340 aa).

In terms of domain architecture, Obg spans 1–158 (MSFIDEAKVY…KYITLKLKII (158 aa)). Positions 159-325 (SDIGIIGLPN…LSTLIQYIHK (167 aa)) constitute an OBG-type G domain. Residues 165 to 172 (GLPNAGKS), 190 to 194 (FTTLE), 211 to 214 (DIPG), 278 to 281 (NKSD), and 306 to 308 (SSI) contribute to the GTP site. Positions 172 and 192 each coordinate Mg(2+).

It belongs to the TRAFAC class OBG-HflX-like GTPase superfamily. OBG GTPase family. Monomer. The cofactor is Mg(2+).

The protein localises to the cytoplasm. Functionally, an essential GTPase which binds GTP, GDP and possibly (p)ppGpp with moderate affinity, with high nucleotide exchange rates and a fairly low GTP hydrolysis rate. Plays a role in control of the cell cycle, stress response, ribosome biogenesis and in those bacteria that undergo differentiation, in morphogenesis control. The polypeptide is GTPase Obg (Ehrlichia chaffeensis (strain ATCC CRL-10679 / Arkansas)).